The primary structure comprises 405 residues: Riboflavin biosynthesis protein RibBA (405 aa).

Residues 1 to 205 (MEEIKLNTIE…IKDLIAYRLK (205 aa)) form a DHBP synthase region. Residues 30-31 (RE), Asp-35, 144-148 (RAGHT), and Glu-168 contribute to the D-ribulose 5-phosphate site. Residue Glu-31 participates in Mg(2+) binding. A Mg(2+)-binding site is contributed by His-147. Residues 206–405 (QESIVEKGVE…RMGHELHNIK (200 aa)) form a GTP cyclohydrolase II region. 256–260 (RMHSS) contacts GTP. 3 residues coordinate Zn(2+): Cys-261, Cys-272, and Cys-274. GTP is bound by residues Gln-277, 299 to 301 (EGR), and Thr-321. Asp-333 (proton acceptor; for GTP cyclohydrolase activity) is an active-site residue. Arg-335 (nucleophile; for GTP cyclohydrolase activity) is an active-site residue. GTP contacts are provided by Thr-356 and Lys-361.

The protein in the N-terminal section; belongs to the DHBP synthase family. It in the C-terminal section; belongs to the GTP cyclohydrolase II family. The cofactor is Mg(2+). Mn(2+) is required as a cofactor. Zn(2+) serves as cofactor.

It carries out the reaction D-ribulose 5-phosphate = (2S)-2-hydroxy-3-oxobutyl phosphate + formate + H(+). It catalyses the reaction GTP + 4 H2O = 2,5-diamino-6-hydroxy-4-(5-phosphoribosylamino)-pyrimidine + formate + 2 phosphate + 3 H(+). The protein operates within cofactor biosynthesis; riboflavin biosynthesis; 2-hydroxy-3-oxobutyl phosphate from D-ribulose 5-phosphate: step 1/1. It participates in cofactor biosynthesis; riboflavin biosynthesis; 5-amino-6-(D-ribitylamino)uracil from GTP: step 1/4. Catalyzes the conversion of D-ribulose 5-phosphate to formate and 3,4-dihydroxy-2-butanone 4-phosphate. Functionally, catalyzes the conversion of GTP to 2,5-diamino-6-ribosylamino-4(3H)-pyrimidinone 5'-phosphate (DARP), formate and pyrophosphate. This chain is Riboflavin biosynthesis protein RibBA, found in Porphyromonas gingivalis (strain ATCC 33277 / DSM 20709 / CIP 103683 / JCM 12257 / NCTC 11834 / 2561).